We begin with the raw amino-acid sequence, 328 residues long: Renalase (328 aa).

Residues alanine 13, 32–33 (DK), arginine 40, and 56–57 (QY) contribute to the FAD site. Residues 57–61 (YFTAR) and 96–98 (SPD) contribute to the substrate site. An FAD-binding site is contributed by isoleucine 128. Position 185 (threonine 185) interacts with substrate. An FAD-binding site is contributed by aspartate 302. Arginine 308 lines the substrate pocket. Valine 309 is an FAD binding site.

The protein belongs to the bacterial renalase family. Requires FAD as cofactor.

The catalysed reaction is 1,2-dihydro-beta-NAD + O2 + H(+) = H2O2 + NAD(+). It catalyses the reaction 1,2-dihydro-beta-NADP + O2 + H(+) = H2O2 + NADP(+). It carries out the reaction 1,6-dihydro-beta-NADP + O2 + H(+) = H2O2 + NADP(+). The enzyme catalyses 1,6-dihydro-beta-NAD + O2 + H(+) = H2O2 + NAD(+). Functionally, catalyzes the oxidation of the 1,2-dihydro- and 1,6-dihydro- isomeric forms of beta-NAD(P) back to beta-NAD(P)+. Has a preference for 1,2-dihydro-beta-NAD as substrate. May serve to protect primary metabolism dehydrogenases from inhibition by the 1,2-dihydro- and 1,6-dihydro-beta-NAD(P) isomers. This chain is Renalase, found in Pseudomonas syringae pv. tomato (strain ATCC BAA-871 / DC3000).